Here is a 577-residue protein sequence, read N- to C-terminus: BAG family molecular chaperone regulator 3 (577 aa).

The span at 1–17 (MSAATQSPMMQMASGNG) shows a compositional bias: polar residues. Disordered stretches follow at residues 1 to 81 (MSAA…LLPI), 126 to 207 (TEAA…SHQL), and 229 to 427 (PSFH…HPGV). Position 2 is an N-acetylserine (serine 2). 2 consecutive WW domains span residues 22–56 (DPLP…DPRV) and 126–157 (TEAA…CGQM). Position 138 is a phosphoserine (serine 138). An Omega-N-methylarginine modification is found at arginine 141. The span at 158 to 204 (PATATTAAAQPPTAHGPERSQSPAASDCSSSSSSASLPSSGRSSLGS) shows a compositional bias: low complexity. A phosphoserine mark is found at serine 179 and serine 204. Positions 256 to 265 (IQGDDWEPRP) are enriched in basic and acidic residues. At arginine 267 the chain carries Omega-N-methylarginine. Residues serine 280, serine 281, and serine 285 each carry the phosphoserine modification. Residue threonine 291 is modified to Phosphothreonine. Phosphoserine is present on serine 297. 2 stretches are compositionally biased toward pro residues: residues 332–341 (PAGPDLPPGH) and 376–392 (IPCP…PSPP). Phosphoserine occurs at positions 380, 382, and 390. Residues 426 to 503 (GVLKVEAILE…TILEKLEQKA (78 aa)) enclose the BAG domain. Lysine 450 participates in a covalent cross-link: Glycyl lysine isopeptide (Lys-Gly) (interchain with G-Cter in SUMO1); alternate. Lysine 450 participates in a covalent cross-link: Glycyl lysine isopeptide (Lys-Gly) (interchain with G-Cter in SUMO2); alternate. Residues 524–577 (QPLQEIMGAVVADKDKKGPENKDPQTESQQLEAKAATPPNPSNPADSAGNLVAP) are disordered. The segment covering 535–548 (ADKDKKGPENKDPQ) has biased composition (basic and acidic residues).

In terms of assembly, forms a ternary complex with HSPA1A/HSP70 and HSPB8, serving as scaffold subunit. Component of the chaperone-assisted selective autophagy (CASA) complex consisting of BAG3, HSPA8/HSC70, HSPB8 and STUB1/CHIP. Binds to the ATPase domain of HSP70 chaperones. Interacts with BCL2. Interacts with phospholipase C-gamma proteins. Interacts with DNAJB1 and DNAJB6. Interacts (via BAG domain) with HSF1; this interaction occurs in normal and heat-shocked cells. Interacts with HSPA8/HSC70 (via NBD), HSPA1A (via NBD) and HSPA1B (via NBD). Interacts (via WW domain 1) with SYNPO2 (via PPPY motif). Interacts with HSPB8.

Its subcellular location is the nucleus. It localises to the cytoplasm. Co-chaperone and adapter protein that connects different classes of molecular chaperones including heat shock proteins 70 (HSP70s), e.g. HSPA1A/HSP70 or HSPA8/HSC70, and small heat shock proteins (sHSPs), e.g. HSPB8. Acts as a nucleotide-exchange factor (NEF) promoting the release of ADP from HSP70s, thereby triggering client protein release. Nucleotide release is mediated via BAG3 binding to the nucleotide-binding domain (NBD) of HSP70s, whereas client release is mediated via its binding to the substrate-binding domain (SBD). Has anti-apoptotic activity. Plays a role in the HSF1 nucleocytoplasmic transport. The chain is BAG family molecular chaperone regulator 3 (Bag3) from Mus musculus (Mouse).